Reading from the N-terminus, the 433-residue chain is Ornithine decarboxylase, chloroplastic (433 aa).

Residue lysine 96 is modified to N6-(pyridoxal phosphate)lysine. Pyridoxal 5'-phosphate contacts are provided by residues serine 228, glycine 266, and 299–302 (EPGR). 342–343 (YD) is a substrate binding site. Cysteine 378 functions as the Proton donor; shared with dimeric partner in the catalytic mechanism. Substrate is bound at residue aspartate 379. Residue tyrosine 407 coordinates pyridoxal 5'-phosphate.

This sequence belongs to the Orn/Lys/Arg decarboxylase class-II family. Homodimer. Only the dimer is catalytically active, as the active sites are constructed of residues from both monomers. Pyridoxal 5'-phosphate is required as a cofactor.

It is found in the plastid. It localises to the chloroplast. It catalyses the reaction L-ornithine + H(+) = putrescine + CO2. It functions in the pathway alkaloid biosynthesis; nicotine biosynthesis. Its pathway is amine and polyamine biosynthesis; putrescine biosynthesis via L-ornithine pathway; putrescine from L-ornithine: step 1/1. Involved in the biosynthesis of pyridine alkaloid natural products, leading mainly to the production of anabasine, anatabine, nicotine and nornicotine, effective deterrents against herbivores with antiparasitic and pesticide properties (neurotoxins); nornicotine serves as the precursor in the synthesis of the carcinogen compound N'-nitrosonornicotine (NNN). Catalyzes the first and rate-limiting step of polyamine biosynthesis that converts ornithine into putrescine, which is the precursor for the polyamines, spermidine and spermine. Polyamines are essential for cell proliferation and are implicated in cellular processes, ranging from DNA replication to apoptosis. In Nicotiana glauca (Glaucous tobacco), this protein is Ornithine decarboxylase, chloroplastic.